Consider the following 199-residue polypeptide: ATP-dependent Clp protease proteolytic subunit (199 aa).

Residue Ser97 is the Nucleophile of the active site. The active site involves His122.

It belongs to the peptidase S14 family. In terms of assembly, fourteen ClpP subunits assemble into 2 heptameric rings which stack back to back to give a disk-like structure with a central cavity, resembling the structure of eukaryotic proteasomes.

It localises to the cytoplasm. It carries out the reaction Hydrolysis of proteins to small peptides in the presence of ATP and magnesium. alpha-casein is the usual test substrate. In the absence of ATP, only oligopeptides shorter than five residues are hydrolyzed (such as succinyl-Leu-Tyr-|-NHMec, and Leu-Tyr-Leu-|-Tyr-Trp, in which cleavage of the -Tyr-|-Leu- and -Tyr-|-Trp bonds also occurs).. Cleaves peptides in various proteins in a process that requires ATP hydrolysis. Has a chymotrypsin-like activity. Plays a major role in the degradation of misfolded proteins. This Citrifermentans bemidjiense (strain ATCC BAA-1014 / DSM 16622 / JCM 12645 / Bem) (Geobacter bemidjiensis) protein is ATP-dependent Clp protease proteolytic subunit.